Here is a 906-residue protein sequence, read N- to C-terminus: Protein translocase subunit SecA (906 aa).

ATP-binding positions include Gln86, 104-108 (GEGKT), and Asp511. Basic and acidic residues-rich tracts occupy residues 853-865 (HESVIDNNQRHDE) and 877-888 (VRREGPKVKRND). Positions 853-906 (HESVIDNNQRHDEDEQEEAPKVQQVRREGPKVKRNDPCPCGSGKKYKQCHGKVE) are disordered. Positions 890, 892, 901, and 902 each coordinate Zn(2+). Residues 896-906 (KKYKQCHGKVE) show a composition bias toward basic residues.

It belongs to the SecA family. In terms of assembly, monomer and homodimer. Part of the essential Sec protein translocation apparatus which comprises SecA, SecYEG and auxiliary proteins SecDF-YajC and YidC. Zn(2+) is required as a cofactor.

The protein localises to the cell inner membrane. It is found in the cytoplasm. The enzyme catalyses ATP + H2O + cellular proteinSide 1 = ADP + phosphate + cellular proteinSide 2.. In terms of biological role, part of the Sec protein translocase complex. Interacts with the SecYEG preprotein conducting channel. Has a central role in coupling the hydrolysis of ATP to the transfer of proteins into and across the cell membrane, serving both as a receptor for the preprotein-SecB complex and as an ATP-driven molecular motor driving the stepwise translocation of polypeptide chains across the membrane. The protein is Protein translocase subunit SecA of Francisella tularensis subsp. holarctica (strain OSU18).